The sequence spans 232 residues: CMP-N,N'-diacetyllegionaminic acid synthase (232 aa).

This sequence belongs to the CMP-NeuNAc synthase family.

The enzyme catalyses N,N-diacetyllegionaminate + CTP = CMP-N,N-diacetyllegionaminate + diphosphate. Functionally, involved in biosynthesis of legionaminic acid (5,7-diamino-3,5,7,9-tetradeoxy-D-glycero-D-galacto-non-2-ulosonic acid)(Leg), a sialic acid-like derivative that is incorporated into virulence-associated cell surface glycoconjugates such as lipopolysaccharide (LPS) which could be a key determinant in the ability of L.pneumophila to inhibit the fusion of phagosomes with lysosomes. LPS contains a majority alpha2,4-linked homomer of legionaminic acid. Catalyzes the conversion of N,N'-diacetyllegionaminic acid (Leg5Ac7Ac) and CTP into CMP-N,N'-diacetyllegionaminic acid (CMP-Leg5Ac7Ac). The polypeptide is CMP-N,N'-diacetyllegionaminic acid synthase (neuA) (Legionella pneumophila subsp. pneumophila (strain Philadelphia 1 / ATCC 33152 / DSM 7513)).